The sequence spans 562 residues: MPQTQRPLYIPYSGPNLLETPLLNKGSAFSKEERAAFNLTGLLPPRYESIEEQAERAYMQYRSFETPINKHIYLRAIQDNNETLFYRLLTDHLEEMMPIIYTPTVGDACEKFSDIYRSSRGLFISYSERDQIDDILRNATKQKVKVIVVTDGERILGLGDQGIGGMGIPIGKLSLYTACGGISPAYTLPVMLDVGTNNEKLLEDPMYMGARHKRIEQDEYDEFLDKFIKAVTRRWPGVMLQFEDFAQPNAMPLLRRYRDEVCCFNDDIQGTASVTVGTLLAACRQKGKKLSEQKVVFVGAGSAGCGIAEQIMIQMTAEGLTEEQAKRQIFMVDRFGLVMDTMDGLRDFQQALAQKTSDLNAWEYSGEYPSLLDVMHCAEPDILIGVSGQAGLFTEQVISTMAKNVERPIIFPLSNPSKHVEAHPADVLKWSEGKAIVATGSPFGEVEYDGRIYPIAQCNNSYIFPGIGLGVLSVKSERVSDEMLRVASKTLANASPSANGKGEALLPAFNDLTQLSKDIAFAVGKVAQQEGLALEIDDDTLRERIDNNFWKPEYRFYKRVSI.

Residue Tyr-101 is the Proton donor of the active site. Arg-154 provides a ligand contact to NAD(+). Catalysis depends on Lys-172, which acts as the Proton acceptor. Residues Glu-243, Asp-244, and Asp-267 each coordinate a divalent metal cation. NAD(+) is bound by residues Asp-267 and Asn-415.

The protein belongs to the malic enzymes family. In terms of assembly, homotetramer. The cofactor is Mg(2+). Mn(2+) is required as a cofactor.

The catalysed reaction is (S)-malate + NAD(+) = pyruvate + CO2 + NADH. The enzyme catalyses oxaloacetate + H(+) = pyruvate + CO2. This Idiomarina loihiensis (strain ATCC BAA-735 / DSM 15497 / L2-TR) protein is NAD-dependent malic enzyme.